We begin with the raw amino-acid sequence, 485 residues long: Ribulose bisphosphate carboxylase large chain (485 aa).

Residues M1 to S2 constitute a propeptide that is removed on maturation. N-acetylproline is present on P3. K14 is subject to N6,N6,N6-trimethyllysine. Substrate contacts are provided by N123 and T173. K175 serves as the catalytic Proton acceptor. Position 177 (K177) interacts with substrate. 3 residues coordinate Mg(2+): K201, D203, and E204. K201 carries the post-translational modification N6-carboxylysine. Catalysis depends on H294, which acts as the Proton acceptor. Residues R295, H327, and S379 each coordinate substrate.

Belongs to the RuBisCO large chain family. Type I subfamily. As to quaternary structure, heterohexadecamer of 8 large chains and 8 small chains; disulfide-linked. The disulfide link is formed within the large subunit homodimers. The cofactor is Mg(2+). In terms of processing, the disulfide bond which can form in the large chain dimeric partners within the hexadecamer appears to be associated with oxidative stress and protein turnover.

The protein resides in the plastid. It is found in the chloroplast. It carries out the reaction 2 (2R)-3-phosphoglycerate + 2 H(+) = D-ribulose 1,5-bisphosphate + CO2 + H2O. It catalyses the reaction D-ribulose 1,5-bisphosphate + O2 = 2-phosphoglycolate + (2R)-3-phosphoglycerate + 2 H(+). In terms of biological role, ruBisCO catalyzes two reactions: the carboxylation of D-ribulose 1,5-bisphosphate, the primary event in carbon dioxide fixation, as well as the oxidative fragmentation of the pentose substrate in the photorespiration process. Both reactions occur simultaneously and in competition at the same active site. In Flaveria bidentis (Coastal plain yellowtops), this protein is Ribulose bisphosphate carboxylase large chain.